The chain runs to 261 residues: Putative glyoxylase CFP32 (261 aa).

VOC domains lie at 11–129 (TPNW…LWQA) and 143–257 (TLIW…VLKP). Glyoxalase regions lie at residues 13 to 123 (NWVD…TGAA) and 149 to 252 (LLTD…GAIF).

In Mycobacterium bovis (strain ATCC BAA-935 / AF2122/97), this protein is Putative glyoxylase CFP32.